A 752-amino-acid chain; its full sequence is F-box and WD repeat domain containing protein 10B (752 aa).

WD repeat units follow at residues 169-206 (GLNQ…TSLP), 451-490 (GHAG…CTRI), 493-532 (GHQG…KTFR), 534-569 (KDPI…LVKT), 572-609 (GHEG…ERCL), and 611-652 (AFKH…KVIK).

Expressed in pancreas, heart and skeletal muscle.

The polypeptide is F-box and WD repeat domain containing protein 10B (Homo sapiens (Human)).